Reading from the N-terminus, the 125-residue chain is Glycine cleavage system H protein (125 aa).

The Lipoyl-binding domain occupies 22–104 (VATVGITIHA…EGEGWLFKLK (83 aa)). Lys-63 is modified (N6-lipoyllysine).

It belongs to the GcvH family. In terms of assembly, the glycine cleavage system is composed of four proteins: P, T, L and H. (R)-lipoate serves as cofactor.

Its function is as follows. The glycine cleavage system catalyzes the degradation of glycine. The H protein shuttles the methylamine group of glycine from the P protein to the T protein. In Brucella abortus (strain 2308), this protein is Glycine cleavage system H protein.